A 493-amino-acid polypeptide reads, in one-letter code: Cytochrome P450 Tp9025 (493 aa).

Residues M1–F21 traverse the membrane as a helical; Signal-anchor for type II membrane protein segment. 2 N-linked (GlcNAc...) asparagine glycosylation sites follow: N209 and N411. C433 is a heme binding site.

It belongs to the cytochrome P450 family. Heme is required as a cofactor.

Its subcellular location is the membrane. It functions in the pathway secondary metabolite biosynthesis; terpenoid biosynthesis. Probably involved in the biosynthesis of germacrene-derived sesquiterpene lactones. In Tanacetum parthenium (Feverfew), this protein is Cytochrome P450 Tp9025.